Consider the following 234-residue polypeptide: MAKATSEARRAVVLLSGGLDSSTCLAVARAEGLEAHCLSVDYGQRHKGELARARRIARALGAAGHRVVKVDLSAFGGSALTDAAIAVPKGRSEARMARDIPVTYVPARNTVMLSLALAHAEVIGAEQIFVGVNAIDYSGYPDCRPAFLHAFERLAKVATRAGVEGHPLRIRAPLLRLSKAGIVRLGTKLGVPYRMTLSCYDPIRGRACGRCDACSLRRKGFAEAGVQDPTQYAK.

15–25 (LSGGLDSSTCL) contributes to the ATP binding site. Residues Cys199, Cys208, Cys211, and Cys214 each contribute to the Zn(2+) site.

The protein belongs to the QueC family. Requires Zn(2+) as cofactor.

The catalysed reaction is 7-carboxy-7-deazaguanine + NH4(+) + ATP = 7-cyano-7-deazaguanine + ADP + phosphate + H2O + H(+). It participates in purine metabolism; 7-cyano-7-deazaguanine biosynthesis. In terms of biological role, catalyzes the ATP-dependent conversion of 7-carboxy-7-deazaguanine (CDG) to 7-cyano-7-deazaguanine (preQ(0)). The chain is 7-cyano-7-deazaguanine synthase from Anaeromyxobacter dehalogenans (strain 2CP-C).